We begin with the raw amino-acid sequence, 556 residues long: Urocanate hydratase (556 aa).

Residues 52-53 (GG), glutamine 130, 176-178 (GMG), glutamate 196, arginine 201, 242-243 (NA), 263-267 (QTSAH), 273-274 (YL), and tyrosine 322 contribute to the NAD(+) site. The active site involves cysteine 410. Glycine 492 contributes to the NAD(+) binding site.

It belongs to the urocanase family. The cofactor is NAD(+).

It localises to the cytoplasm. It carries out the reaction 4-imidazolone-5-propanoate = trans-urocanate + H2O. It participates in amino-acid degradation; L-histidine degradation into L-glutamate; N-formimidoyl-L-glutamate from L-histidine: step 2/3. In terms of biological role, catalyzes the conversion of urocanate to 4-imidazolone-5-propionate. The protein is Urocanate hydratase of Shewanella sp. (strain ANA-3).